Here is a 504-residue protein sequence, read N- to C-terminus: Maturase K (504 aa).

It belongs to the intron maturase 2 family. MatK subfamily.

It localises to the plastid. Its subcellular location is the chloroplast. Usually encoded in the trnK tRNA gene intron. Probably assists in splicing its own and other chloroplast group II introns. The polypeptide is Maturase K (Rorippa amphibia (Great yellow-cress)).